The sequence spans 216 residues: Somatotropin (216 aa).

A signal peptide spans 1–26 (MAAGPRTSVLLAFALLCLPWTQEVGA). Zn(2+) is bound at residue His45. The cysteines at positions 78 and 189 are disulfide-linked. The residue at position 131 (Ser131) is a Phosphoserine. Residue Glu198 participates in Zn(2+) binding. Cys206 and Cys214 form a disulfide bridge.

The protein belongs to the somatotropin/prolactin family.

The protein localises to the secreted. Plays an important role in growth control. Its major role in stimulating body growth is to stimulate the liver and other tissues to secrete IGF1. It stimulates both the differentiation and proliferation of myoblasts. It also stimulates amino acid uptake and protein synthesis in muscle and other tissues. The chain is Somatotropin (GH1) from Hippopotamus amphibius (Hippopotamus).